Here is a 292-residue protein sequence, read N- to C-terminus: Homoserine kinase (292 aa).

84–94 (PLSRGLGSSSA) contacts ATP.

This sequence belongs to the GHMP kinase family. Homoserine kinase subfamily.

It localises to the cytoplasm. The enzyme catalyses L-homoserine + ATP = O-phospho-L-homoserine + ADP + H(+). The protein operates within amino-acid biosynthesis; L-threonine biosynthesis; L-threonine from L-aspartate: step 4/5. Functionally, catalyzes the ATP-dependent phosphorylation of L-homoserine to L-homoserine phosphate. The polypeptide is Homoserine kinase (Campylobacter jejuni subsp. jejuni serotype O:2 (strain ATCC 700819 / NCTC 11168)).